The sequence spans 425 residues: Serine hydroxymethyltransferase (425 aa).

Residues Leu-125 and 129 to 131 (GHL) each bind (6S)-5,6,7,8-tetrahydrofolate. N6-(pyridoxal phosphate)lysine is present on Lys-234.

This sequence belongs to the SHMT family. Homodimer. Requires pyridoxal 5'-phosphate as cofactor.

It localises to the cytoplasm. It catalyses the reaction (6R)-5,10-methylene-5,6,7,8-tetrahydrofolate + glycine + H2O = (6S)-5,6,7,8-tetrahydrofolate + L-serine. Its pathway is one-carbon metabolism; tetrahydrofolate interconversion. It participates in amino-acid biosynthesis; glycine biosynthesis; glycine from L-serine: step 1/1. Functionally, catalyzes the reversible interconversion of serine and glycine with tetrahydrofolate (THF) serving as the one-carbon carrier. This reaction serves as the major source of one-carbon groups required for the biosynthesis of purines, thymidylate, methionine, and other important biomolecules. Also exhibits THF-independent aldolase activity toward beta-hydroxyamino acids, producing glycine and aldehydes, via a retro-aldol mechanism. This Marinomonas sp. (strain MWYL1) protein is Serine hydroxymethyltransferase.